Here is a 299-residue protein sequence, read N- to C-terminus: ATP phosphoribosyltransferase (299 aa).

This sequence belongs to the ATP phosphoribosyltransferase family. Long subfamily. Equilibrium between an active dimeric form, an inactive hexameric form and higher aggregates. Interconversion between the various forms is largely reversible and is influenced by the natural substrates and inhibitors of the enzyme. It depends on Mg(2+) as a cofactor.

The protein resides in the cytoplasm. The catalysed reaction is 1-(5-phospho-beta-D-ribosyl)-ATP + diphosphate = 5-phospho-alpha-D-ribose 1-diphosphate + ATP. The protein operates within amino-acid biosynthesis; L-histidine biosynthesis; L-histidine from 5-phospho-alpha-D-ribose 1-diphosphate: step 1/9. With respect to regulation, feedback inhibited by histidine. In terms of biological role, catalyzes the condensation of ATP and 5-phosphoribose 1-diphosphate to form N'-(5'-phosphoribosyl)-ATP (PR-ATP). Has a crucial role in the pathway because the rate of histidine biosynthesis seems to be controlled primarily by regulation of HisG enzymatic activity. This is ATP phosphoribosyltransferase from Buchnera aphidicola subsp. Acyrthosiphon pisum (strain 5A).